The following is a 117-amino-acid chain: Large ribosomal subunit protein uL18 (117 aa).

The protein belongs to the universal ribosomal protein uL18 family. Part of the 50S ribosomal subunit; part of the 5S rRNA/L5/L18/L25 subcomplex. Contacts the 5S and 23S rRNAs.

Its function is as follows. This is one of the proteins that bind and probably mediate the attachment of the 5S RNA into the large ribosomal subunit, where it forms part of the central protuberance. This chain is Large ribosomal subunit protein uL18, found in Glaesserella parasuis serovar 5 (strain SH0165) (Haemophilus parasuis).